The following is a 413-amino-acid chain: Arginine biosynthesis bifunctional protein ArgJ (413 aa).

Substrate-binding residues include T160, K186, T197, E284, N408, and S413. Residue T197 is the Nucleophile of the active site.

The protein belongs to the ArgJ family. In terms of assembly, heterotetramer of two alpha and two beta chains.

Its subcellular location is the cytoplasm. The catalysed reaction is N(2)-acetyl-L-ornithine + L-glutamate = N-acetyl-L-glutamate + L-ornithine. It carries out the reaction L-glutamate + acetyl-CoA = N-acetyl-L-glutamate + CoA + H(+). The protein operates within amino-acid biosynthesis; L-arginine biosynthesis; L-ornithine and N-acetyl-L-glutamate from L-glutamate and N(2)-acetyl-L-ornithine (cyclic): step 1/1. Its pathway is amino-acid biosynthesis; L-arginine biosynthesis; N(2)-acetyl-L-ornithine from L-glutamate: step 1/4. Functionally, catalyzes two activities which are involved in the cyclic version of arginine biosynthesis: the synthesis of N-acetylglutamate from glutamate and acetyl-CoA as the acetyl donor, and of ornithine by transacetylation between N(2)-acetylornithine and glutamate. In Burkholderia mallei (strain ATCC 23344), this protein is Arginine biosynthesis bifunctional protein ArgJ.